A 590-amino-acid polypeptide reads, in one-letter code: Histone-binding protein N1/N2 (590 aa).

Positions 1–30 (MAEETAALSTEKTEDTSTAPSTSAEKADGI) are disordered. The stretch at 36–69 (AKRLMGAGQKHLVMKDVRSAVNLFQEASSLLAKQ) is one TPR 1 repeat. The disordered stretch occupies residues 102-328 (ALEGMPEDDE…EKETEEEDVG (227 aa)). Residues 106-120 (MPEDDEEEAEKEEDP) show a composition bias toward acidic residues. Basic and acidic residues-rich tracts occupy residues 128–250 (LDEK…DAKE) and 262–275 (AEEK…ESKE). The segment covering 293-327 (EKMEEEEEGEDSEENEDGTEENEGTEEKETEEEDV) has biased composition (acidic residues). TPR repeat units follow at residues 357–390 (AQAH…QKEH) and 399–432 (AETH…IEKR). Residues 492-590 (GGSSGFSKEN…METATVESTA (99 aa)) are disordered. The span at 496–525 (GFSKENGSTSSSSAVEKSGDSTVPVTNCVS) shows a compositional bias: polar residues. The Nuclear localization signal motif lies at 531–537 (VRKKRKT). Basic and acidic residues predominate over residues 536–553 (KTEEESPLKDKDAKKSKQ).

The protein belongs to the NASP family.

It is found in the nucleus. This protein is involved in nucleosome assembly. It is bound to H3 and H4 in the absence of DNA, but released from H3 and H4 in the presence of DNA. The protein is Histone-binding protein N1/N2 of Xenopus laevis (African clawed frog).